Reading from the N-terminus, the 429-residue chain is Tryptophan synthase beta chain 2 (429 aa).

N6-(pyridoxal phosphate)lysine is present on Lys111.

Belongs to the TrpB family. Tetramer of two alpha and two beta chains. It depends on pyridoxal 5'-phosphate as a cofactor.

The enzyme catalyses (1S,2R)-1-C-(indol-3-yl)glycerol 3-phosphate + L-serine = D-glyceraldehyde 3-phosphate + L-tryptophan + H2O. The protein operates within amino-acid biosynthesis; L-tryptophan biosynthesis; L-tryptophan from chorismate: step 5/5. Functionally, the beta subunit is responsible for the synthesis of L-tryptophan from indole and L-serine. This Saccharolobus solfataricus (strain ATCC 35092 / DSM 1617 / JCM 11322 / P2) (Sulfolobus solfataricus) protein is Tryptophan synthase beta chain 2 (trpB2).